We begin with the raw amino-acid sequence, 450 residues long: Keratin, type I cytoskeletal 25 (450 aa).

The disordered stretch occupies residues 1–24 (MSLRLPSGSRRAGPRPTTGSLRLS). The head stretch occupies residues 1 to 78 (MSLRLPSGSR…MNEGGLLSGN (78 aa)). The interval 79–114 (EKVTMQNLNDRLASYLENVRALEEANADLEQKIKGW) is coil 1A. An IF rod domain is found at 79 to 394 (EKVTMQNLND…LLIGGDDGAC (316 aa)). A linker 1 region spans residues 115–136 (YEKFGPGSCRGLDHDYSRYLPI). Residues 137-228 (IEDLKNQIIA…KNHKEEMQVL (92 aa)) form a coil 1B region. Residues 229-251 (QCAAGGNVNVEMNAAPGVDLTVL) form a linker 12 region. The segment at 252 to 390 (LNNMRAEYEA…ETYCLLIGGD (139 aa)) is coil 2. Residues 391-450 (DGACKSGGYKSKDYAAGNMGNQMKDPIRAIVVKKVLEEVDQRSKVLTTRLHSLEEKSQSN) are tail. Residue Ser442 is modified to Phosphoserine.

Belongs to the intermediate filament family. Heterodimer of a type I and a type II keratin. Heterodimer with type II keratin KRT5 leading to the formation of keratin intermediate filament (KIF) network. Interacts with KRT6A to form filaments. Expressed in skin and wool follicle. Expression localized to the inner root sheath of wool follicle.

It localises to the cytoplasm. Its function is as follows. Essential for the proper assembly of type I and type II keratin protein complexes and formation of keratin intermediate filaments in the inner root sheath (irs). Plays a role in the cytoskeleton organization. This chain is Keratin, type I cytoskeletal 25, found in Ovis aries (Sheep).